The following is a 397-amino-acid chain: CCA-adding enzyme (397 aa).

ATP contacts are provided by G26 and R29. CTP contacts are provided by G26 and R29. D39 and D41 together coordinate Mg(2+). 5 residues coordinate ATP: R110, D153, R156, R159, and R162. CTP contacts are provided by R110, D153, R156, R159, and R162.

This sequence belongs to the tRNA nucleotidyltransferase/poly(A) polymerase family. Bacterial CCA-adding enzyme type 3 subfamily. Homodimer. It depends on Mg(2+) as a cofactor.

The enzyme catalyses a tRNA precursor + 2 CTP + ATP = a tRNA with a 3' CCA end + 3 diphosphate. The catalysed reaction is a tRNA with a 3' CCA end + 2 CTP + ATP = a tRNA with a 3' CCACCA end + 3 diphosphate. In terms of biological role, catalyzes the addition and repair of the essential 3'-terminal CCA sequence in tRNAs without using a nucleic acid template. Adds these three nucleotides in the order of C, C, and A to the tRNA nucleotide-73, using CTP and ATP as substrates and producing inorganic pyrophosphate. tRNA 3'-terminal CCA addition is required both for tRNA processing and repair. Also involved in tRNA surveillance by mediating tandem CCA addition to generate a CCACCA at the 3' terminus of unstable tRNAs. While stable tRNAs receive only 3'-terminal CCA, unstable tRNAs are marked with CCACCA and rapidly degraded. In Bacillus cereus (strain Q1), this protein is CCA-adding enzyme.